Reading from the N-terminus, the 294-residue chain is Probable 3-hydroxyisobutyrate dehydrogenase (294 aa).

NAD(+)-binding positions include 3–31 (TIAF…RGFD) and Thr93. The active site involves Lys168. Lys243 serves as a coordination point for NAD(+).

It belongs to the HIBADH-related family.

It catalyses the reaction 3-hydroxy-2-methylpropanoate + NAD(+) = 2-methyl-3-oxopropanoate + NADH + H(+). The protein operates within amino-acid degradation; L-valine degradation. This is Probable 3-hydroxyisobutyrate dehydrogenase (mmsB) from Mycobacterium bovis (strain ATCC BAA-935 / AF2122/97).